A 118-amino-acid polypeptide reads, in one-letter code: Nucleoid-associated protein TM_0687 (118 aa).

Belongs to the YbaB/EbfC family. In terms of assembly, homodimer.

The protein resides in the cytoplasm. It localises to the nucleoid. In terms of biological role, binds to DNA and alters its conformation. May be involved in regulation of gene expression, nucleoid organization and DNA protection. The sequence is that of Nucleoid-associated protein TM_0687 from Thermotoga maritima (strain ATCC 43589 / DSM 3109 / JCM 10099 / NBRC 100826 / MSB8).